A 293-amino-acid polypeptide reads, in one-letter code: SAGA-associated factor 29 (293 aa).

A coiled-coil region spans residues 3-86; the sequence is LVSADSRIAE…LRKALDKIAE (84 aa). The region spanning 152 to 293 is the SGF29 C-terminal domain; the sequence is GDYVAKPGDK…VVACKEPKKK (142 aa). Histone H3K4me3 N-terminus binding regions lie at residues 194 to 196 and 240 to 243; these read DID and QTTC. The segment at 264–266 is histone H3K4me3 binding; the sequence is FED. Lys-288 is subject to N6-acetyllysine.

Belongs to the SGF29 family. In terms of assembly, interacts with dimethylated and trimethylated 'Lys-4' of histone H3 (H3K4me2 and H3K4me3), with a preference for the trimethylated form (H3K4me3). Component of some SAGA-type complexes. Component of the ADA2A-containing complex (ATAC), composed of KAT14, KAT2A, TADA2L, TADA3L, ZZ3, MBIP, WDR5, YEATS2, CCDC101 and DR1. Interacts with (methylated) CGAS. Interacts with TADA3L, GCN5L2, SUPT3H and MYC.

The protein localises to the nucleus. In terms of biological role, chromatin reader component of some histone acetyltransferase (HAT) SAGA-type complexes like the TFTC-HAT, ATAC or STAGA complexes. SGF29 specifically recognizes and binds methylated 'Lys-4' of histone H3 (H3K4me), with a preference for trimethylated form (H3K4me3). In the SAGA-type complexes, SGF29 is required to recruit complexes to H3K4me. Involved in the response to endoplasmic reticulum (ER) stress by recruiting the SAGA complex to H3K4me, thereby promoting histone H3 acetylation and cell survival. Also binds non-histone proteins that are methylated on Lys residues: specifically recognizes and binds CGAS monomethylated on 'Lys-491'. The sequence is that of SAGA-associated factor 29 from Mus musculus (Mouse).